The following is an 872-amino-acid chain: Cadherin-1 (872 aa).

An N-terminal signal peptide occupies residues 1-25 (MGLKRPWLLGAVVLLTLIQVQGGLA). Residues 26–148 (EWTQCRMGFS…SETGLKRQKR (123 aa)) constitute a propeptide that is removed on maturation. Cadherin domains are found at residues 148 to 256 (RDWV…DPVF), 257 to 370 (TQSV…PPVF), 371 to 481 (DPTQ…APIF), 482 to 589 (LPPV…GPFL), and 605 to 688 (VFTI…MQCE). Over 149–701 (DWVIPPIIVS…AIAGGLGISA (553 aa)) the chain is Extracellular. N-linked (GlcNAc...) asparagine glycosylation occurs at Asn209. Ca(2+)-binding residues include Asp251 and Asp282. N-linked (GlcNAc...) asparagine glycans are attached at residues Asn456, Asn552, Asn631, and Asn669. A helical membrane pass occupies residues 702–722 (IVGILGGILALLLLLLLLLLF). The Cytoplasmic segment spans residues 723-872 (VRRKKVVKEP…LADMYGGDED (150 aa)). The tract at residues 739 to 758 (ETRDNVFSYDEEGGGEEDQD) is disordered. Over residues 747–758 (YDEEGGGEEDQD) the composition is skewed to acidic residues.

In terms of assembly, homodimer. In terms of tissue distribution, abundantly expressed in intestine, stomach, liver, kidney, skin and eye. Also expressed in heart, lung, testis, ovary, muscle and brain.

The protein localises to the cell junction. The protein resides in the adherens junction. Its subcellular location is the cell membrane. It is found in the endosome. It localises to the golgi apparatus. The protein localises to the trans-Golgi network. The protein resides in the cytoplasm. Its subcellular location is the desmosome. In terms of biological role, cadherins are calcium-dependent cell adhesion proteins. They preferentially interact with themselves in a homophilic manner in connecting cells; cadherins may thus contribute to the sorting of heterogeneous cell types. Promotes organization of radial actin fiber structure and cellular response to contractile forces, via anchoring of radial actin fibers to CDH1 junction complexes at the cell membrane. E-cadherin is a ligand for integrin alpha-E/beta-7. The sequence is that of Cadherin-1 (cdh1) from Xenopus laevis (African clawed frog).